The sequence spans 351 residues: Phospho-N-acetylmuramoyl-pentapeptide-transferase (351 aa).

10 helical membrane-spanning segments follow: residues 17-37 (TAYA…FIIL), 63-83 (IPTM…FFWI), 85-105 (FWNI…CLGF), 124-144 (FKIY…YYFG), 158-178 (SLKL…LISA), 190-210 (GLAI…AYLA), 230-250 (LVVF…FNAY), 254-274 (IMMG…TALI), 279-299 (ILFA…IIQV), and 328-348 (QVVI…LSTL).

This sequence belongs to the glycosyltransferase 4 family. MraY subfamily. Requires Mg(2+) as cofactor.

It is found in the cell inner membrane. The catalysed reaction is UDP-N-acetyl-alpha-D-muramoyl-L-alanyl-gamma-D-glutamyl-meso-2,6-diaminopimeloyl-D-alanyl-D-alanine + di-trans,octa-cis-undecaprenyl phosphate = di-trans,octa-cis-undecaprenyl diphospho-N-acetyl-alpha-D-muramoyl-L-alanyl-D-glutamyl-meso-2,6-diaminopimeloyl-D-alanyl-D-alanine + UMP. It participates in cell wall biogenesis; peptidoglycan biosynthesis. In terms of biological role, catalyzes the initial step of the lipid cycle reactions in the biosynthesis of the cell wall peptidoglycan: transfers peptidoglycan precursor phospho-MurNAc-pentapeptide from UDP-MurNAc-pentapeptide onto the lipid carrier undecaprenyl phosphate, yielding undecaprenyl-pyrophosphoryl-MurNAc-pentapeptide, known as lipid I. This Borrelia turicatae (strain 91E135) protein is Phospho-N-acetylmuramoyl-pentapeptide-transferase.